The primary structure comprises 280 residues: Hemin import ATP-binding protein HmuV (280 aa).

One can recognise an ABC transporter domain in the interval 26 to 260; sequence LAAAGGLRVH…GLLSEVYDQP (235 aa). An ATP-binding site is contributed by 59-66; that stretch reads GPNGAGKS.

Belongs to the ABC transporter superfamily. Heme (hemin) importer (TC 3.A.1.14.5) family. As to quaternary structure, the complex is composed of two ATP-binding proteins (HmuV), two transmembrane proteins (HmuU) and a solute-binding protein (HmuT).

The protein resides in the cell membrane. Its function is as follows. Part of the ABC transporter complex HmuTUV involved in hemin import. Responsible for energy coupling to the transport system. The chain is Hemin import ATP-binding protein HmuV from Streptomyces coelicolor (strain ATCC BAA-471 / A3(2) / M145).